The following is a 376-amino-acid chain: Chaperone protein DnaJ (376 aa).

A J domain is found at 5 to 70 (DYYEVLGVGR…DKKAAYDQFG (66 aa)). Residues 132–210 (GLTKELRIPT…CHGEGRVEKS (79 aa)) form a CR-type zinc finger. Zn(2+)-binding residues include C145, C148, C162, C165, C184, C187, C198, and C201. CXXCXGXG motif repeat units follow at residues 145-152 (CDLCDGSG), 162-169 (CGTCHGQG), 184-191 (CPTCHGRG), and 198-205 (CGKCHGEG).

This sequence belongs to the DnaJ family. Homodimer. It depends on Zn(2+) as a cofactor.

Its subcellular location is the cytoplasm. In terms of biological role, participates actively in the response to hyperosmotic and heat shock by preventing the aggregation of stress-denatured proteins and by disaggregating proteins, also in an autonomous, DnaK-independent fashion. Unfolded proteins bind initially to DnaJ; upon interaction with the DnaJ-bound protein, DnaK hydrolyzes its bound ATP, resulting in the formation of a stable complex. GrpE releases ADP from DnaK; ATP binding to DnaK triggers the release of the substrate protein, thus completing the reaction cycle. Several rounds of ATP-dependent interactions between DnaJ, DnaK and GrpE are required for fully efficient folding. Also involved, together with DnaK and GrpE, in the DNA replication of plasmids through activation of initiation proteins. The chain is Chaperone protein DnaJ from Shewanella loihica (strain ATCC BAA-1088 / PV-4).